The primary structure comprises 1002 residues: Inversin-B (1002 aa).

ANK repeat units lie at residues 9 to 39 (SLAS…VIDQ), 43 to 72 (LGRT…KVNR), 76 to 105 (SGRT…DCTH), 109 to 140 (CDIT…QVDA), 144 to 173 (RKQT…NIGI), 177 to 209 (EGKI…TESL), 216 to 246 (EGRT…NVAP), 250 to 279 (LFRT…SPNI), 284 to 313 (QGAT…VRDE), 317 to 346 (EGRT…KLEV), 352 to 381 (YGGT…QADA), 385 to 414 (MKHT…KVHL), 418 to 447 (DGRS…NPDA), 451 to 480 (EGRT…DPNI), 484 to 513 (NGRT…FPNQ), and 519 to 549 (ERYT…SIAA). Positions 486–494 (RTALHWSCN) match the D-box 1 motif. The 30-residue stretch at 551–580 (QDIAAFKIQAVYKGHKVRRAFQERKNLLMK) folds into the IQ 1 domain. Composition is skewed to basic and acidic residues over residues 586–599 (KGAA…ENRQ), 609–621 (KQKD…RQNK), and 643–656 (AEDR…ENLE). Disordered regions lie at residues 586–804 (KGAA…KGRR) and 862–886 (SAKT…SSSA). Composition is skewed to polar residues over residues 670–680 (QRITAQIQSSP) and 687–706 (NSIQ…SSPL). 2 stretches are compositionally biased toward basic and acidic residues: residues 733 to 763 (HQME…EERK) and 770 to 796 (QSSD…EGKK). The D-box 2 signature appears at 959–967 (RKQLFQRKN). The region spanning 966–995 (KNHAATVIQKAWRTYWVRKSSCKTRHSRSQ) is the IQ 2 domain.

In terms of assembly, interacts with apc2. Binds calmodulin.

Its subcellular location is the cytoplasm. It is found in the cytoskeleton. Functionally, required for normal renal development and establishment of left-right axis. Probably acts as a molecular switch between different Wnt signaling pathways. Inhibits the canonical Wnt pathway by targeting cytoplasmic disheveled for degradation by the ubiquitin-proteasome. This suggests that it is required in renal development to oppose the repression of terminal differentiation of tubular epithelial cells by Wnt signaling. Plays a central role in convergent extension movements in gastrulating embryos, a processus regulated by Wnt signaling. In Xenopus laevis (African clawed frog), this protein is Inversin-B (invs-b).